Reading from the N-terminus, the 830-residue chain is Envelope glycoprotein B (830 aa).

The N-terminal stretch at 1–22 is a signal peptide; the sequence is MSKMAVLFLAVFLMNSVLMIYC. The Virion surface segment spans residues 23 to 688; sequence DPDHYIRAGY…GGVVSFLKNP (666 aa). Cystine bridges form between cysteine 41-cysteine 482, cysteine 58-cysteine 438, cysteine 131-cysteine 197, and cysteine 290-cysteine 337. The interval 98-104 is involved in fusion and/or binding to host membrane; sequence SYRDVGV. A glycan (N-linked (GlcNAc...) asparagine; by host) is linked at asparagine 155. An involved in fusion and/or binding to host membrane region spans residues 184 to 191; the sequence is GPLWLYST. 8 N-linked (GlcNAc...) asparagine; by host glycosylation sites follow: asparagine 228, asparagine 247, asparagine 286, asparagine 307, asparagine 329, asparagine 355, asparagine 361, and asparagine 486. Cysteine 510 and cysteine 548 are oxidised to a cystine. 2 hydrophobic membrane proximal region regions span residues 634–686 and 644–685; these read IEAK…SFLK and SYVN…VSFL. Residues 689–709 traverse the membrane as a helical segment; it reads FGGGLMLILAIVVVVIIIVVF. The Intravirion segment spans residues 710–830; that stretch reads VRQRHVLSKP…GYKSVNVEEA (121 aa). The Internalization motif motif lies at 822–825; that stretch reads YKSV.

It belongs to the herpesviridae glycoprotein B family. Homotrimer; disulfide-linked. Binds to heparan sulfate proteoglycans. Interacts with gH/gL heterodimer. Post-translationally, a proteolytic cleavage by host furin generates two subunits that remain linked by disulfide bonds.

It localises to the virion membrane. The protein resides in the host cell membrane. It is found in the host endosome membrane. Its subcellular location is the host Golgi apparatus membrane. Its function is as follows. Envelope glycoprotein that forms spikes at the surface of virion envelope. Essential for the initial attachment to heparan sulfate moieties of the host cell surface proteoglycans. Involved in fusion of viral and cellular membranes leading to virus entry into the host cell. Following initial binding to its host receptors, membrane fusion is mediated by the fusion machinery composed at least of gB and the heterodimer gH/gL. May be involved in the fusion between the virion envelope and the outer nuclear membrane during virion egress. The sequence is that of Envelope glycoprotein B from Human herpesvirus 6A (strain Uganda-1102) (HHV-6 variant A).